We begin with the raw amino-acid sequence, 247 residues long: Probable dihydroorotate dehydrogenase B (NAD(+)), electron transfer subunit (247 aa).

Residues 1 to 87 (MLRRVTLKET…RGPYGNGFKE (87 aa)) enclose the FAD-binding FR-type domain. [2Fe-2S] cluster-binding residues include Cys-200, Cys-205, Cys-208, and Cys-216.

Belongs to the PyrK family. Heterotetramer of 2 PyrK and 2 PyrD type B subunits. It depends on [2Fe-2S] cluster as a cofactor. Requires FAD as cofactor.

It functions in the pathway pyrimidine metabolism; UMP biosynthesis via de novo pathway; orotate from (S)-dihydroorotate (NAD(+) route): step 1/1. Functionally, responsible for channeling the electrons from the oxidation of dihydroorotate from the FMN redox center in the PyrD type B subunit to the ultimate electron acceptor NAD(+). This chain is Probable dihydroorotate dehydrogenase B (NAD(+)), electron transfer subunit, found in Pyrococcus horikoshii (strain ATCC 700860 / DSM 12428 / JCM 9974 / NBRC 100139 / OT-3).